The sequence spans 1289 residues: Ethylene-insensitive protein 2.1 (1289 aa).

The next 5 membrane-spanning stretches (helical) occupy residues 18-38 (LLPA…PGKW), 48-68 (FGFD…LCQY), 96-116 (FLGV…ILGI), 128-148 (LSTC…FATL), and 155-175 (SFLC…GVLI). Residue N185 is glycosylated (N-linked (GlcNAc...) asparagine). A helical transmembrane segment spans residues 199–219 (LMSLLGASIMPHNFFLHSAIV). N227 is a glycosylation site (N-linked (GlcNAc...) asparagine). 7 helical membrane-spanning segments follow: residues 235–255 (LNHF…NFVL), 260–280 (ANVF…MSLM), 288–308 (VAPF…AFSW), 335–355 (IIAV…GIYQ), 356–376 (LLIL…IPLF), 393–413 (FLEF…IIFV), and 439–459 (YIVL…LAAT). N521 carries N-linked (GlcNAc...) asparagine glycosylation. The disordered stretch occupies residues 611 to 659 (LHTEKEDDEGDNWEPEDSSKGVPGSTLSLTSDGPGSFRSLSGKSDAGGN). Residues 616–626 (EDDEGDNWEPE) show a composition bias toward acidic residues. Residues 635–652 (STLSLTSDGPGSFRSLSG) are compositionally biased toward polar residues. 2 positions are modified to phosphoserine: S646 and S663. A glycan (N-linked (GlcNAc...) asparagine) is linked at N745. The tract at residues 792 to 816 (SIADSSERRYSGVRTPPSSDGWDNQ) is disordered. The span at 807–816 (PPSSDGWDNQ) shows a compositional bias: polar residues. The residue at position 819 (T819) is a Phosphothreonine. The residue at position 923 (S923) is a Phosphoserine. N1025 is a glycosylation site (N-linked (GlcNAc...) asparagine). The interval 1208 to 1227 (HRSSPPASNGMLPPASKPGR) is disordered. A Nuclear localization signal motif is present at residues 1274–1281 (LKRYKRRL).

This sequence belongs to the NRAMP (TC 2.A.55) family.

The protein resides in the endoplasmic reticulum membrane. It localises to the nucleus. Its subcellular location is the cytoplasm. Functionally, central factor in signaling pathways regulated by ethylene (ET) and involved in various processes including development, plant defense, senescence, nucleotide sugar flux, and tropisms. Trafficking signal inducing ethylene response. The nuclear localization is both necessary and sufficient to activate EIN3-mediated transcription and ethylene responses. The chain is Ethylene-insensitive protein 2.1 from Populus trichocarpa (Western balsam poplar).